A 239-amino-acid chain; its full sequence is uncharacterized protein (239 aa).

The segment at 104 to 127 is disordered; sequence LPATSQSSQPKSTNSSTESSSIGQ. Positions 107–127 are enriched in low complexity; the sequence is TSQSSQPKSTNSSTESSSIGQ. Positions 134–202 form a coiled coil; it reads ENEINLNKNK…HFIQNNQESF (69 aa). The helical transmembrane segment at 211–231 threads the bilayer; it reads VKIGSAFIIYIFYNVLFFIIV.

The protein resides in the membrane. This is an uncharacterized protein from Dictyostelium discoideum (Social amoeba).